The chain runs to 119 residues: Holo-[acyl-carrier-protein] synthase (119 aa).

Positions 8 and 58 each coordinate Mg(2+).

This sequence belongs to the P-Pant transferase superfamily. AcpS family. The cofactor is Mg(2+).

The protein resides in the cytoplasm. The enzyme catalyses apo-[ACP] + CoA = holo-[ACP] + adenosine 3',5'-bisphosphate + H(+). Its function is as follows. Transfers the 4'-phosphopantetheine moiety from coenzyme A to a Ser of acyl-carrier-protein. The polypeptide is Holo-[acyl-carrier-protein] synthase (Bacillus cereus (strain ATCC 14579 / DSM 31 / CCUG 7414 / JCM 2152 / NBRC 15305 / NCIMB 9373 / NCTC 2599 / NRRL B-3711)).